Reading from the N-terminus, the 507-residue chain is Subtilisin-like protease 1 (507 aa).

The N-terminal stretch at 1-19 is a signal peptide; the sequence is MGVFRFISISLAAVSAANA. Positions 20–116 are excised as a propeptide; it reads AQILSMPHAQ…VEPDTIISVN (97 aa). In terms of domain architecture, Inhibitor I9 spans 34–113; that stretch reads SYIVMMKDDT…VMFVEPDTII (80 aa). The region spanning 126-400 is the Peptidase S8 domain; that stretch reads SWGLARISNS…NVLISNGGAK (275 aa). Active-site charge relay system residues include Asp158 and His190. The tract at residues 175-198 is disordered; sequence GSNQVNDGDDRDGSGHGTHTSGTM. A glycan (N-linked (GlcNAc...) asparagine) is linked at Asn251. The span at 282-294 shows a compositional bias: polar residues; the sequence is NENQDARSSSPAS. Residues 282-312 are disordered; sequence NENQDARSSSPASEPSVCTVGSSAEDDSRSS. Ser345 serves as the catalytic Charge relay system. Polar residues predominate over residues 378-394; the sequence is SSSITDVGPGTPTNVLI. Positions 378–486 are disordered; sequence SSSITDVGPG…YPGGDNFDFD (109 aa). Composition is skewed to pro residues over residues 405–428 and 438–449; these read KPAPGPSPNPSQPSEPQQPAPSQP and EPFPGEPFPGEP. A compositionally biased stretch (low complexity) spans 450 to 461; it reads FPGESSPGESAP. A compositionally biased stretch (pro residues) spans 462–476; it reads APAPMPPSPQHPHTP.

It belongs to the peptidase S8 family.

The protein resides in the secreted. Its function is as follows. Secreted subtilisin-like serine protease with keratinolytic activity that contributes to pathogenicity. This Trichophyton tonsurans (Scalp ringworm fungus) protein is Subtilisin-like protease 1 (SUB1).